Here is a 565-residue protein sequence, read N- to C-terminus: Proline--tRNA ligase (565 aa).

Belongs to the class-II aminoacyl-tRNA synthetase family. ProS type 1 subfamily. Homodimer.

It is found in the cytoplasm. It carries out the reaction tRNA(Pro) + L-proline + ATP = L-prolyl-tRNA(Pro) + AMP + diphosphate. Its function is as follows. Catalyzes the attachment of proline to tRNA(Pro) in a two-step reaction: proline is first activated by ATP to form Pro-AMP and then transferred to the acceptor end of tRNA(Pro). As ProRS can inadvertently accommodate and process non-cognate amino acids such as alanine and cysteine, to avoid such errors it has two additional distinct editing activities against alanine. One activity is designated as 'pretransfer' editing and involves the tRNA(Pro)-independent hydrolysis of activated Ala-AMP. The other activity is designated 'posttransfer' editing and involves deacylation of mischarged Ala-tRNA(Pro). The misacylated Cys-tRNA(Pro) is not edited by ProRS. The protein is Proline--tRNA ligase of Francisella tularensis subsp. mediasiatica (strain FSC147).